The primary structure comprises 180 residues: p-cumate 2,3-dioxygenase system, small oxygenase component (180 aa).

Belongs to the bacterial ring-hydroxylating dioxygenase beta subunit family. The p-cumate 2,3-dioxygenase multicomponent enzyme system is composed of an electron transfer component and a dioxygenase component (iron sulfur protein (ISP)). The electron transfer component is composed of a ferredoxin reductase (CmtAa) and a ferredoxin (CmtAd), and the dioxygenase component is formed of a large alpha subunit (CmtAb) and a small beta subunit (CmtAc).

It participates in aromatic compound metabolism; p-cumate degradation; acetaldehyde and pyruvate from p-cumate. Component of the p-cumate 2,3-dioxygenase multicomponent enzyme system which catalyzes the incorporation of both atoms of molecular oxygen into p-cumate to form cis-2,3-dihydroxy-2,3-dihydro-p-cumate. The beta subunit seems to have a structural role in the holoenzyme. Also able to catalyze the cis-dihydroxylation of indole-2-carboxylate and indole-3-carboxylate. This chain is p-cumate 2,3-dioxygenase system, small oxygenase component, found in Pseudomonas putida (Arthrobacter siderocapsulatus).